Here is a 270-residue protein sequence, read N- to C-terminus: Acyl-[acyl-carrier-protein]--UDP-N-acetylglucosamine O-acyltransferase (270 aa).

Belongs to the transferase hexapeptide repeat family. LpxA subfamily. Homotrimer.

The protein localises to the cytoplasm. The enzyme catalyses a (3R)-hydroxyacyl-[ACP] + UDP-N-acetyl-alpha-D-glucosamine = a UDP-3-O-[(3R)-3-hydroxyacyl]-N-acetyl-alpha-D-glucosamine + holo-[ACP]. Its pathway is glycolipid biosynthesis; lipid IV(A) biosynthesis; lipid IV(A) from (3R)-3-hydroxytetradecanoyl-[acyl-carrier-protein] and UDP-N-acetyl-alpha-D-glucosamine: step 1/6. Involved in the biosynthesis of lipid A, a phosphorylated glycolipid that anchors the lipopolysaccharide to the outer membrane of the cell. This Sinorhizobium medicae (strain WSM419) (Ensifer medicae) protein is Acyl-[acyl-carrier-protein]--UDP-N-acetylglucosamine O-acyltransferase.